Here is a 166-residue protein sequence, read N- to C-terminus: Endoribonuclease YbeY (166 aa).

H132, H136, and H142 together coordinate Zn(2+).

This sequence belongs to the endoribonuclease YbeY family. Zn(2+) is required as a cofactor.

Its subcellular location is the cytoplasm. Its function is as follows. Single strand-specific metallo-endoribonuclease involved in late-stage 70S ribosome quality control and in maturation of the 3' terminus of the 16S rRNA. The protein is Endoribonuclease YbeY of Clostridium botulinum (strain ATCC 19397 / Type A).